A 577-amino-acid polypeptide reads, in one-letter code: Aspartate--tRNA(Asp/Asn) ligase (577 aa).

Residue E171 coordinates L-aspartate. The segment at Q195 to K198 is aspartate. Position 217 (R217) interacts with L-aspartate. Residues R217 to E219 and Q226 each bind ATP. H444 contributes to the L-aspartate binding site. Residue E474 coordinates ATP. R481 contacts L-aspartate. Residue G526–R529 coordinates ATP.

Belongs to the class-II aminoacyl-tRNA synthetase family. Type 1 subfamily. As to quaternary structure, homodimer.

The protein resides in the cytoplasm. It carries out the reaction tRNA(Asx) + L-aspartate + ATP = L-aspartyl-tRNA(Asx) + AMP + diphosphate. Functionally, aspartyl-tRNA synthetase with relaxed tRNA specificity since it is able to aspartylate not only its cognate tRNA(Asp) but also tRNA(Asn). Reaction proceeds in two steps: L-aspartate is first activated by ATP to form Asp-AMP and then transferred to the acceptor end of tRNA(Asp/Asn). The sequence is that of Aspartate--tRNA(Asp/Asn) ligase from Helicobacter pylori (strain Shi470).